The sequence spans 132 residues: MYASFAPATWALLAYLFGALALCLLMLGLGRVLGGRSHGRAKNLPFESGVDSTGSSRLRFSVKYALVAMLFVIFGIEMPFLYLWAVSLRENGWAGFVEATLFVSLLLVGLFYLHRVGALDWSPERRRKKPHD.

Helical transmembrane passes span W10–G30, L66–V86, and W93–L113.

It belongs to the complex I subunit 3 family. NDH-1 is composed of 13 different subunits. Subunits NuoA, H, J, K, L, M, N constitute the membrane sector of the complex.

It localises to the cell inner membrane. The enzyme catalyses a quinone + NADH + 5 H(+)(in) = a quinol + NAD(+) + 4 H(+)(out). In terms of biological role, NDH-1 shuttles electrons from NADH, via FMN and iron-sulfur (Fe-S) centers, to quinones in the respiratory chain. The immediate electron acceptor for the enzyme in this species is believed to be ubiquinone. Couples the redox reaction to proton translocation (for every two electrons transferred, four hydrogen ions are translocated across the cytoplasmic membrane), and thus conserves the redox energy in a proton gradient. This is NADH-quinone oxidoreductase subunit A 2 from Pseudomonas aeruginosa (strain UCBPP-PA14).